Consider the following 310-residue polypeptide: Bis(hydroxyethyl) terephthalate hydrolase (310 aa).

Positions 1–48 (MQQNPHTHAAPGAARPVLRGVRRRLAAVTAAVAAVLVLGTLTGPGAQA) form a signal peptide, tat-type signal. Phe111 provides a ligand contact to bis(2-hydroxyethyl) terephthalate. The Nucleophile role is filled by Ser179. Residues Met180 and Trp204 each coordinate bis(2-hydroxyethyl) terephthalate. Active-site charge relay system residues include Asp225 and His257. Cysteines 290 and 306 form a disulfide.

The protein belongs to the AB hydrolase superfamily. Predicted to be exported by the Tat system. The position of the signal peptide cleavage has not been experimentally proven.

It is found in the secreted. It carries out the reaction bis(2-hydroxyethyl) terephthalate + H2O = 4-[(2-hydroxyethoxy)carbonyl]benzoate + ethylene glycol + H(+). In terms of biological role, catalyzes the degradation of bis(hydroxyethyl) terephthalate (BHET), a derived-oligomer of the plastic poly(ethylene terephthalate) (PET), hydrolyzing BHET to mono(2-hydroxyethyl) terephthalate (MHET). Shows no activity against PET. The chain is Bis(hydroxyethyl) terephthalate hydrolase from Streptomyces coelicolor (strain ATCC BAA-471 / A3(2) / M145).